The primary structure comprises 214 residues: Transcription factor 23 (214 aa).

2 disordered regions span residues Met-1–Arg-86 and Asp-174–Lys-214. Basic and acidic residues predominate over residues Thr-40–Ser-49. The 53-residue stretch at Glu-76–Leu-128 folds into the bHLH domain. The segment covering Asp-174 to Gln-183 has biased composition (polar residues).

In terms of assembly, forms inactive heterodimeric complexes with TCF3. As to expression, expressed in liver, kidney and spleen.

The protein localises to the nucleus. Functionally, inhibits E-box-mediated binding and transactivation of bHLH factors. Inhibitory effect is similar to that of ID proteins. Inhibits the formation of TCF3 and MYOD1 homodimers and heterodimers. Lacks DNA binding activity. Seems to play a role in the inhibition of myogenesis. The chain is Transcription factor 23 (TCF23) from Homo sapiens (Human).